The sequence spans 123 residues: Fluoride-specific ion channel FluC (123 aa).

4 helical membrane-spanning segments follow: residues 7–27 (VAIALGGALGALARFYISGIL), 39–59 (LVNSIASFILGYIYGLLFWGI), 68–88 (FFGTGFCGALSTFSTFSYETF), and 100–120 (ALNISANVIITVSLVFIGFIL). Residues Gly75 and Ser78 each coordinate Na(+).

This sequence belongs to the fluoride channel Fluc/FEX (TC 1.A.43) family.

The protein resides in the cell membrane. The catalysed reaction is fluoride(in) = fluoride(out). With respect to regulation, na(+) is not transported, but it plays an essential structural role and its presence is essential for fluoride channel function. In terms of biological role, fluoride-specific ion channel. Important for reducing fluoride concentration in the cell, thus reducing its toxicity. This chain is Fluoride-specific ion channel FluC, found in Thermococcus onnurineus (strain NA1).